An 867-amino-acid polypeptide reads, in one-letter code: Alanine--tRNA ligase (867 aa).

Residues His558, His562, Cys660, and His664 each coordinate Zn(2+).

It belongs to the class-II aminoacyl-tRNA synthetase family. The cofactor is Zn(2+).

It localises to the cytoplasm. It catalyses the reaction tRNA(Ala) + L-alanine + ATP = L-alanyl-tRNA(Ala) + AMP + diphosphate. Functionally, catalyzes the attachment of alanine to tRNA(Ala) in a two-step reaction: alanine is first activated by ATP to form Ala-AMP and then transferred to the acceptor end of tRNA(Ala). Also edits incorrectly charged Ser-tRNA(Ala) and Gly-tRNA(Ala) via its editing domain. The sequence is that of Alanine--tRNA ligase from Fervidobacterium nodosum (strain ATCC 35602 / DSM 5306 / Rt17-B1).